The chain runs to 309 residues: Dicarboxylate carrier UCP2 (309 aa).

Topologically, residues 1–16 (MVGFKATDVPPTATVK) are mitochondrial intermembrane. 3 Solcar repeats span residues 11 to 106 (PTAT…VKQF), 114 to 203 (AGIG…IKDT), and 212 to 297 (DDLP…LKRA). Positions 16 to 63 (KFLGAGTAACIADLITFPLDTAKVRLQIQGESQGLVRTAASAQYRGVL) are important for interaction with long-chain fatty acids. A helical membrane pass occupies residues 17 to 40 (FLGAGTAACIADLITFPLDTAKVR). At 41 to 77 (LQIQGESQGLVRTAASAQYRGVLGTILTMVRTEGPRS) the chain is on the mitochondrial matrix side. A helical transmembrane segment spans residues 78–103 (LYNGLVAGLQRQMSFASVRIGLYDSV). Residues 104 to 119 (KQFYTKGSEHAGIGSR) are Mitochondrial intermembrane-facing. The chain crosses the membrane as a helical span at residues 120–145 (LLAGSTTGALAVAVAQPTDVVKVRFQ). Topologically, residues 146 to 173 (AQARAGGGRRYQSTVEAYKTIAREEGIR) are mitochondrial matrix. A helical membrane pass occupies residues 174–199 (GLWKGTSPNVARNAIVNCAELVTYDL). At 200–217 (IKDTLLKANLMTDDLPCH) the chain is on the mitochondrial intermembrane side. A helical membrane pass occupies residues 218–242 (FTSAFGAGFCTTVIASPVDVVKTRY). Topologically, residues 243-268 (MNSALGQYHSAGHCALTMLRKEGPRA) are mitochondrial matrix. Residues 269–294 (FYKGFMPSFLRLGSWNVVMFVTYEQL) traverse the membrane as a helical segment. The segment at 278–285 (LRLGSWNV) is important for interaction with long-chain fatty acids. Residues 295–309 (KRALMAAYQSREAPF) are Mitochondrial intermembrane-facing.

This sequence belongs to the mitochondrial carrier (TC 2.A.29) family. Homotetramer. Adopts an asymmetrical dimer of dimers functional form. Interacts with MICU1 (when methylated); leading to decrease the calcium sensitivity of MICU1. In terms of tissue distribution, widely expressed. Highest in spleen, lung, white and brown adipose tissues. 4-6 times higher levels are detected in white adipose tissue of ob/ob and db/db mice when compared to lean littermates. Expressed in neurons of the ventromedial nucleus of the hypothalamus (at protein level). Expressed in thymocytes (at protein level).

It localises to the mitochondrion inner membrane. It catalyses the reaction L-aspartate(out) + phosphate(in) + H(+)(in) = L-aspartate(in) + phosphate(out) + H(+)(out). The catalysed reaction is oxaloacetate(out) + phosphate(in) + H(+)(in) = oxaloacetate(in) + phosphate(out) + H(+)(out). The enzyme catalyses (S)-malate(out) + phosphate(in) + H(+)(in) = (S)-malate(in) + phosphate(out) + H(+)(out). It carries out the reaction malonate(out) + phosphate(in) + H(+)(in) = malonate(in) + phosphate(out) + H(+)(out). It catalyses the reaction sulfate(out) + phosphate(in) + H(+)(in) = sulfate(in) + phosphate(out) + H(+)(out). The catalysed reaction is (S)-malate(out) = (S)-malate(in). The enzyme catalyses L-aspartate(out) = L-aspartate(in). It carries out the reaction phosphate(in) = phosphate(out). It catalyses the reaction chloride(in) = chloride(out). The catalysed reaction is H(+)(in) = H(+)(out). The enzyme catalyses a long-chain fatty acid(out) = a long-chain fatty acid(in). With respect to regulation, proton conductance is activated by free long-chain fatty acids and allosterically inhibited by purine nucleotides. Could be constitutively inhibited by GDP. Functionally, antiporter that exports dicarboxylate intermediates of the Krebs cycle in exchange for phosphate plus a proton across the inner membrane of mitochondria, a process driven by mitochondrial motive force with an overall impact on glycolysis, glutaminolysis and glutathione-dependent redox balance. Continuous export of oxaloacetate and related four-carbon dicarboxylates from mitochondrial matrix into the cytosol negatively regulates the oxidation of acetyl-CoA substrates via the Krebs cycle lowering the ATP/ADP ratio and reactive oxygen species (ROS) production. May mediate inducible proton entry into the mitochondrial matrix affecting ATP turnover as a protection mechanism against oxidative stress. The proton currents are most likely associated with fatty acid flipping across the inner membrane of mitochondria in a metabolic process regulated by free fatty acids and purine nucleotides. Regulates the use of glucose as a source of energy. Required for glucose-induced DRP1-dependent mitochondrial fission and neuron activation in the ventromedial nucleus of the hypothalamus (VMH). This mitochondrial adaptation mechanism modulates the VMH pool of glucose-excited neurons with an impact on systemic glucose homeostasis. Regulates ROS levels and metabolic reprogramming of macrophages during the resolution phase of inflammation. Attenuates ROS production in response to IL33 to preserve the integrity of the Krebs cycle required for persistent production of itaconate and subsequent GATA3-dependent differentiation of inflammation-resolving alternatively activated macrophages. Can unidirectionally transport anions including L-malate, L-aspartate, phosphate and chloride ions. Does not mediate adaptive thermogenesis. This is Dicarboxylate carrier UCP2 (Ucp2) from Mus musculus (Mouse).